Reading from the N-terminus, the 332-residue chain is D-alanine--D-alanine ligase (332 aa).

The 206-residue stretch at 124-329 folds into the ATP-grasp domain; that stretch reads KMWFSALNIP…FPDYLLSNIN (206 aa). 154–209 serves as a coordination point for ATP; that stretch reads ALVNWGSIFVKAASQGSSVGCYRIDNQEDVASTLAQAFTYSDYVIVEKTISARELE. Positions 283, 296, and 298 each coordinate Mg(2+).

Belongs to the D-alanine--D-alanine ligase family. The cofactor is Mg(2+). Mn(2+) is required as a cofactor.

Its subcellular location is the cytoplasm. The catalysed reaction is 2 D-alanine + ATP = D-alanyl-D-alanine + ADP + phosphate + H(+). It functions in the pathway cell wall biogenesis; peptidoglycan biosynthesis. Cell wall formation. In Shewanella piezotolerans (strain WP3 / JCM 13877), this protein is D-alanine--D-alanine ligase.